A 358-amino-acid polypeptide reads, in one-letter code: Biotin synthase (358 aa).

Positions 50–277 constitute a Radical SAM core domain; it reads NEVQVSTLCS…KSHVRLSAGR (228 aa). Cys65, Cys69, and Cys72 together coordinate [4Fe-4S] cluster. Positions 109, 140, 200, and 272 each coordinate [2Fe-2S] cluster.

This sequence belongs to the radical SAM superfamily. Biotin synthase family. Homodimer. It depends on [4Fe-4S] cluster as a cofactor. Requires [2Fe-2S] cluster as cofactor.

It catalyses the reaction (4R,5S)-dethiobiotin + (sulfur carrier)-SH + 2 reduced [2Fe-2S]-[ferredoxin] + 2 S-adenosyl-L-methionine = (sulfur carrier)-H + biotin + 2 5'-deoxyadenosine + 2 L-methionine + 2 oxidized [2Fe-2S]-[ferredoxin]. It functions in the pathway cofactor biosynthesis; biotin biosynthesis; biotin from 7,8-diaminononanoate: step 2/2. Its function is as follows. Catalyzes the conversion of dethiobiotin (DTB) to biotin by the insertion of a sulfur atom into dethiobiotin via a radical-based mechanism. The protein is Biotin synthase of Cellvibrio japonicus (strain Ueda107) (Pseudomonas fluorescens subsp. cellulosa).